The primary structure comprises 258 residues: Hydroxypyruvate isomerase (258 aa).

Residues Glu143 and Glu240 each act as proton donor/acceptor in the active site.

This sequence belongs to the hyi family. Homodimer.

It catalyses the reaction 3-hydroxypyruvate = 2-hydroxy-3-oxopropanoate. Its activity is regulated as follows. Not stimulated by addition of pyridoxal 5'-phosphate (0.1 mM), FAD, NAD(+), NADP(+) or ATP (1 mM each). EDTA (10 mM) and metal ions (1 mM) such as Ca(2+), Co(2+), Mg(2+), Ni(2+), Zn(2+) do not affect the enzyme activity. Its function is as follows. Catalyzes the reversible isomerization between hydroxypyruvate and 2-hydroxy-3-oxopropanoate (also termed tartronate semialdehyde). Does not catalyze the isomerization of D-fructose to D-glucose or that of D-xylulose to D-xylose. Also does not catalyze racemization of serine, alanine, glycerate or lactate. The sequence is that of Hydroxypyruvate isomerase (hyi) from Escherichia coli (strain K12).